Consider the following 122-residue polypeptide: MPAARQQRGAAVEAAARALLEQAGLRLVVGNANYRGGELDLVMRDGPALVFVEVRYRRDDRFGGGAASVDWRKRRKLVLAAQLFLGAHPTLAALPCRFDVVDASGEPPVLHWIRDAFRADDC.

This sequence belongs to the UPF0102 family.

The polypeptide is UPF0102 protein XCV0816 (Xanthomonas euvesicatoria pv. vesicatoria (strain 85-10) (Xanthomonas campestris pv. vesicatoria)).